Consider the following 637-residue polypeptide: Neuroendocrine convertase 2 (637 aa).

The N-terminal stretch at 1 to 24 (MEGGCGSQWKAAGLLFCVMVFASA) is a signal peptide. Positions 25–108 (ERPVFTNHFL…QQEGFDRKKR (84 aa)) are excised as a propeptide. A Peptidase S8 domain is found at 128–452 (QWYLFNTGQA…YGVLDAGAMV (325 aa)). Residues aspartate 166 and histidine 207 each act as charge relay system in the active site. Intrachain disulfides connect cysteine 224–cysteine 375 and cysteine 316–cysteine 346. Asparagine 374 carries N-linked (GlcNAc...) asparagine glycosylation. The Charge relay system role is filled by serine 383. The P/Homo B domain occupies 460–596 (TVPERFHCVG…TLMLHGTQSA (137 aa)). The cysteines at positions 467 and 493 are disulfide-linked. N-linked (GlcNAc...) asparagine glycans are attached at residues asparagine 513 and asparagine 523.

This sequence belongs to the peptidase S8 family. Furin subfamily.

The protein resides in the cytoplasmic vesicle. It is found in the secretory vesicle. The protein localises to the secreted. The enzyme catalyses Release of protein hormones and neuropeptides from their precursors, generally by hydrolysis of -Lys-Arg-|- bonds.. In terms of biological role, serine endopeptidase which is involved in the processing of hormone and other protein precursors at sites comprised of pairs of basic amino acid residues. Responsible for the release of glucagon from proglucagon in pancreatic A cells. The polypeptide is Neuroendocrine convertase 2 (Pcsk2) (Rattus norvegicus (Rat)).